The chain runs to 563 residues: MGLQACLLGLFALILSGKCSYSPEPDQRRTLPPGWVSLGRADPEEELSLTFALRQQNLERLSELVQAVSDPNSPQYGKYLTLENVADLVRPSPLTLHMVQKWLLAAGAQKCHSVITQDFLTCWLSIRQAELLLPGAEFHHYVGGPTETHVVRSPRPYQLPQALAPHVDFVGGLHRFPPTSSLRQRPEPQVTGTVGLHLGVTPSVIRKRYNLTSQDVGSGTSNNSQACAQFLEQYFHDSDLAQFMRLFGGNFAHQASVTRVVGQQGRGRAGIEASLDVQYLMSAGANISTWVYSSPGRHEGQEPFLQWLMLLSNESALPHVHTVSYGDEEDSLSSAYIQRVNTELMKAAARGLTLLFASGDSGAGCWSVSGRHQFRPTFPASSPYVTTVGGTSFQEPFLITNEIVDYISGGGFSNVFPRPSYQEEAVAKFLSSSPHLPPSGYFNASGRAYPDVAALSDGYWVVSNRVPIPWVSGTSASTPVFGGLLSLINEHRILSGRPPLGFLNPRLYQQHGAGLFDVTHGCHASCLDEEVEGQGFCSGPGWDPVTGWGTPNFPALLKTLLNP.

A signal peptide spans 1–19 (MGLQACLLGLFALILSGKC). Residues 20–195 (SYSPEPDQRR…PEPQVTGTVG (176 aa)) constitute a propeptide, removed in mature form. A disulfide bridge links cysteine 111 with cysteine 122. The region spanning 199 to 563 (GVTPSVIRKR…PALLKTLLNP (365 aa)) is the Peptidase S53 domain. Residues asparagine 210 and asparagine 222 are each glycosylated (N-linked (GlcNAc...) asparagine). Active-site charge relay system residues include glutamate 272 and aspartate 276. Residues asparagine 286, asparagine 313, and asparagine 443 are each glycosylated (N-linked (GlcNAc...) asparagine). Cystine bridges form between cysteine 365–cysteine 526 and cysteine 522–cysteine 537. The active-site Charge relay system is serine 475. 2 residues coordinate Ca(2+): aspartate 517 and valine 518. Ca(2+) contacts are provided by glycine 539, glycine 541, and aspartate 543.

In terms of assembly, monomer. Interacts with CLN5. Interacts with CLN3. Ca(2+) serves as cofactor. Post-translationally, activated by autocatalytic proteolytical processing upon acidification. N-glycosylation is required for processing and activity.

It is found in the lysosome. It localises to the melanosome. The enzyme catalyses Release of an N-terminal tripeptide from a polypeptide, but also has endopeptidase activity.. Lysosomal serine protease with tripeptidyl-peptidase I activity. May act as a non-specific lysosomal peptidase which generates tripeptides from the breakdown products produced by lysosomal proteinases. Requires substrates with an unsubstituted N-terminus. In Macaca fascicularis (Crab-eating macaque), this protein is Tripeptidyl-peptidase 1 (TPP1).